Consider the following 125-residue polypeptide: Small ribosomal subunit protein eS6 (125 aa).

The tract at residues 90–109 (KGPGFRPKEKGERRKKTVRG) is disordered.

Belongs to the eukaryotic ribosomal protein eS6 family. Part of the 30S ribosomal subunit.

The sequence is that of Small ribosomal subunit protein eS6 from Pyrococcus furiosus (strain ATCC 43587 / DSM 3638 / JCM 8422 / Vc1).